A 110-amino-acid polypeptide reads, in one-letter code: Serum amyloid A protein (110 aa).

The interval 73–110 (GGSGRGAEDSRADQAANEWGRSGKDPNHFRPHGLPDKY) is disordered. Basic and acidic residues predominate over residues 93 to 110 (RSGKDPNHFRPHGLPDKY).

Belongs to the SAA family. In terms of processing, this protein is the precursor of amyloid protein A, which is formed by the removal of residues from the C-terminal end. In terms of tissue distribution, expressed by the liver; secreted in plasma.

In terms of biological role, major acute phase reactant. Apolipoprotein of the HDL complex. The protein is Serum amyloid A protein (SAA1) of Equus caballus (Horse).